The sequence spans 452 residues: Tylactone mycaminosyltransferase (452 aa).

The span at 1–16 (MRRALDDRRRGPHGPE) shows a compositional bias: basic and acidic residues. The tract at residues 1 to 20 (MRRALDDRRRGPHGPEGKPP) is disordered.

It belongs to the glycosyltransferase 28 family.

It carries out the reaction tylactone + dTDP-alpha-D-mycaminose = 5-O-beta-D-mycaminosyltylactone + dTDP + H(+). It participates in antibiotic biosynthesis; tylosin biosynthesis. Its activity is regulated as follows. The activity of TylM2 is substantially increased by the addition of the accessory protein TylM3. Its function is as follows. Involved in the biosynthesis of the macrolide antibiotic tylosin derived from the polyketide lactone tylactone. Catalyzes the transfer of alpha-D-mycaminosyl from dTDP-alpha-D-mycaminose to the 5-hydroxyl group of tylactone to yield 5-O-mycaminosytylactone. It can also accept 16-membered tylactone and 12-membered ring macrolide. The sequence is that of Tylactone mycaminosyltransferase from Streptomyces fradiae (Streptomyces roseoflavus).